The sequence spans 115 residues: Iron-sulfur cluster insertion protein ErpA (115 aa).

Residues Cys42, Cys106, and Cys108 each coordinate iron-sulfur cluster.

The protein belongs to the HesB/IscA family. In terms of assembly, homodimer. The cofactor is iron-sulfur cluster.

Functionally, required for insertion of 4Fe-4S clusters for at least IspG. The polypeptide is Iron-sulfur cluster insertion protein ErpA (Baumannia cicadellinicola subsp. Homalodisca coagulata).